Here is a 409-residue protein sequence, read N- to C-terminus: L-cysteine:1D-myo-inositol 2-amino-2-deoxy-alpha-D-glucopyranoside ligase (409 aa).

The tract at residues 1–27 is disordered; it reads MHAWPASEVPALPGQGRDLRIHDTATG. Residue Cys-43 coordinates Zn(2+). L-cysteinyl-5'-AMP is bound by residues 43-46, Thr-58, and 81-83; these read CGIT and NVT. A 'HIGH' region motif is present at residues 45 to 55; the sequence is ITPYDATHMGH. The 'ERGGDP' region motif lies at 183–188; it reads ERGGDP. Trp-224 contributes to the L-cysteinyl-5'-AMP binding site. Zn(2+) is bound at residue Cys-228. 246–248 is an L-cysteinyl-5'-AMP binding site; it reads GSD. His-253 lines the Zn(2+) pocket. Val-280 contributes to the L-cysteinyl-5'-AMP binding site. A 'KMSKS' region motif is present at residues 286–290; it reads KMSKS.

This sequence belongs to the class-I aminoacyl-tRNA synthetase family. MshC subfamily. In terms of assembly, monomer. It depends on Zn(2+) as a cofactor.

It carries out the reaction 1D-myo-inositol 2-amino-2-deoxy-alpha-D-glucopyranoside + L-cysteine + ATP = 1D-myo-inositol 2-(L-cysteinylamino)-2-deoxy-alpha-D-glucopyranoside + AMP + diphosphate + H(+). Its function is as follows. Catalyzes the ATP-dependent condensation of GlcN-Ins and L-cysteine to form L-Cys-GlcN-Ins. The sequence is that of L-cysteine:1D-myo-inositol 2-amino-2-deoxy-alpha-D-glucopyranoside ligase (mshC) from Streptomyces coelicolor (strain ATCC BAA-471 / A3(2) / M145).